The chain runs to 264 residues: [LysW]-aminoadipate/[LysW]-glutamate kinase (264 aa).

Substrate is bound by residues 35–36 (GG), Arg-62, and Asn-167.

The protein belongs to the acetylglutamate kinase family. LysZ subfamily.

The protein localises to the cytoplasm. It carries out the reaction [amino-group carrier protein]-C-terminal-N-(1,4-dicarboxybutan-1-yl)-L-glutamine + ATP = [amino-group carrier protein]-C-terminal-N-(1-carboxy-5-phosphooxy-5-oxopentan-1-yl)-L-glutamine + ADP. The catalysed reaction is [amino-group carrier protein]-C-terminal-gamma-(L-glutamyl)-L-glutamate + ATP = [amino-group carrier protein]-C-terminal-gamma-(5-phospho-L-glutamyl)-L-glutamate + ADP. It functions in the pathway amino-acid biosynthesis; L-lysine biosynthesis via AAA pathway; L-lysine from L-alpha-aminoadipate (Thermus route): step 2/5. It participates in amino-acid biosynthesis; L-arginine biosynthesis. Functionally, involved in both the arginine and lysine biosynthetic pathways. Phosphorylates the LysW-bound precursors glutamate (for arginine biosynthesis), respectively alpha-aminoadipate (for lysine biosynthesis). The protein is [LysW]-aminoadipate/[LysW]-glutamate kinase of Saccharolobus islandicus (strain Y.N.15.51 / Yellowstone #2) (Sulfolobus islandicus).